Consider the following 135-residue polypeptide: Phosphoribosyl-AMP cyclohydrolase (135 aa).

Asp89 contacts Mg(2+). Cys90 serves as a coordination point for Zn(2+). The Mg(2+) site is built by Asp91 and Asp93. 2 residues coordinate Zn(2+): Cys106 and Cys113.

This sequence belongs to the PRA-CH family. In terms of assembly, homodimer. It depends on Mg(2+) as a cofactor. The cofactor is Zn(2+).

The protein resides in the cytoplasm. It carries out the reaction 1-(5-phospho-beta-D-ribosyl)-5'-AMP + H2O = 1-(5-phospho-beta-D-ribosyl)-5-[(5-phospho-beta-D-ribosylamino)methylideneamino]imidazole-4-carboxamide. The protein operates within amino-acid biosynthesis; L-histidine biosynthesis; L-histidine from 5-phospho-alpha-D-ribose 1-diphosphate: step 3/9. Functionally, catalyzes the hydrolysis of the adenine ring of phosphoribosyl-AMP. This Bifidobacterium adolescentis (strain ATCC 15703 / DSM 20083 / NCTC 11814 / E194a) protein is Phosphoribosyl-AMP cyclohydrolase.